We begin with the raw amino-acid sequence, 181 residues long: Probable cobalt-precorrin-6B C(15)-methyltransferase (decarboxylating) (181 aa).

Residues threonine 16, 40–44 (GCGSG), aspartate 61, and alanine 89 each bind S-adenosyl-L-methionine.

It belongs to the methyltransferase superfamily. Archaeal-type CbiT family.

The catalysed reaction is Co-precorrin-6B + S-adenosyl-L-methionine = Co-precorrin-7 + S-adenosyl-L-homocysteine + CO2. It participates in cofactor biosynthesis; adenosylcobalamin biosynthesis; cob(II)yrinate a,c-diamide from sirohydrochlorin (anaerobic route): step 8/10. Its function is as follows. Catalyzes the methylation of C-15 in cobalt-precorrin-6B followed by the decarboxylation of C-12 to form cobalt-precorrin-7. This Methanococcus maripaludis (strain C7 / ATCC BAA-1331) protein is Probable cobalt-precorrin-6B C(15)-methyltransferase (decarboxylating).